Reading from the N-terminus, the 50-residue chain is uncharacterized protein (50 aa).

It is found in the mitochondrion. This is an uncharacterized protein from Saccharomyces cerevisiae (strain ATCC 204508 / S288c) (Baker's yeast).